Here is a 148-residue protein sequence, read N- to C-terminus: uncharacterized protein (148 aa).

Over residues 1–11 the composition is skewed to polar residues; the sequence is MKPRNINNSLP. The tract at residues 1–31 is disordered; the sequence is MKPRNINNSLPLQPLVPDQENKNKKNEEKSV. The segment covering 19–30 has biased composition (basic and acidic residues); it reads QENKNKKNEEKS.

This is an uncharacterized protein from Escherichia coli (strain K12).